We begin with the raw amino-acid sequence, 377 residues long: Compound eye opsin BCRH1 (377 aa).

At 1–53 the chain is on the extracellular side; sequence MANVTGPQMAFYGSGAATFGYPEGMTVADFVPDRVKHMVLDHWYNYPPVNPMW. N-linked (GlcNAc...) asparagine glycosylation is present at Asn3. Residues 54–78 form a helical membrane-spanning segment; the sequence is HYLLGVVYLFLGVISIAGNGLVIYL. Residues 79–90 are Cytoplasmic-facing; the sequence is YMKSQALKTPAN. The chain crosses the membrane as a helical span at residues 91-115; that stretch reads MLIVNLALSDLIMLTTNFPPFCYNC. The Extracellular portion of the chain corresponds to 116–131; it reads FSGGRWMFSGTYCEIY. A disulfide bond links Cys128 and Cys205. A helical membrane pass occupies residues 132-151; that stretch reads AALGAITGVCSIWTLCMISF. The Cytoplasmic segment spans residues 152–170; that stretch reads DRYNIICNGFNGPKLTQGK. The chain crosses the membrane as a helical span at residues 171–194; the sequence is ATFMCGLAWVISVGWSLPPFFGWG. At 195 to 218 the chain is on the extracellular side; sequence SYTLEGILDSCSYDYFTRDMNTIT. The helical transmembrane segment at 219-246 threads the bilayer; it reads YNICIFIFDFFLPASVIVFSYVFIVKAI. The Cytoplasmic segment spans residues 247–281; the sequence is FAHEAAMRAQAKKMNVTNLRSNEAETQRAEIRIAK. The chain crosses the membrane as a helical span at residues 282-305; sequence TALVNVSLWFICWTPYAAITIQGL. Topologically, residues 306–313 are extracellular; that stretch reads LGNAEGIT. A helical membrane pass occupies residues 314 to 338; it reads PLLTTLPALLAKSCSCYNPFVYAIS. Position 325 is an N6-(retinylidene)lysine (Lys325). Topologically, residues 339 to 377 are cytoplasmic; that stretch reads HPKFRLAITQHLPWFCVHEKDPNDVEENQSSNTQTQEKS.

The protein belongs to the G-protein coupled receptor 1 family. Opsin subfamily. Phosphorylated on some or all of the serine and threonine residues present in the C-terminal region. In terms of tissue distribution, expressed in all of the seven retinular cells (R1-R7) forming the main rhabdom in each ommatidium.

Its subcellular location is the membrane. Visual pigments are the light-absorbing molecules that mediate vision. They consist of an apoprotein, opsin, covalently linked to cis-retinal. This opsin produces visual pigments with maximal absorption in the blue-green region of the spectrum. In Hemigrapsus sanguineus (Asian shore crab), this protein is Compound eye opsin BCRH1.